Here is a 166-residue protein sequence, read N- to C-terminus: Ribosome maturation factor RimM (166 aa).

The PRC barrel domain occupies 94 to 166 (GDEYYWRDLM…EMVVRLLPGL (73 aa)).

Belongs to the RimM family. Binds ribosomal protein uS19.

It is found in the cytoplasm. Its function is as follows. An accessory protein needed during the final step in the assembly of 30S ribosomal subunit, possibly for assembly of the head region. Essential for efficient processing of 16S rRNA. May be needed both before and after RbfA during the maturation of 16S rRNA. It has affinity for free ribosomal 30S subunits but not for 70S ribosomes. The polypeptide is Ribosome maturation factor RimM (Syntrophus aciditrophicus (strain SB)).